The primary structure comprises 353 residues: MAIDENKQKALAAALGQIEKQFGKGSIMRLGEDRSMDVETISTGSLSLDIALGAGGLPMGRIVEIYGPESSGKTTLTLQVIAAAQREGKTCAFIDAEHALDPIYARKLGVDIDNLLCSQPDTGEQALEICDALARSGAVDVIVVDSVAALTPKAEIEGEIGDSHMGLAARMMSQAMRKLAGNLKQSNTLLIFINQIRMKIGVMFGNPETTTGGNALKFYASVRLDIRRIGAVKEGENVVGSETRVKVVKNKIAAPFKQAEFQILYGEGINFYGELVDLGVKEKLIEKAGAWYSYKGEKIGQGKANATAWLKDNPETAKEIEKKVRELLLSNPNSTPDFSVDDSEGVAETNEDF.

67–74 (GPESSGKT) lines the ATP pocket. Positions 330–353 (SNPNSTPDFSVDDSEGVAETNEDF) are disordered. The segment covering 339 to 353 (SVDDSEGVAETNEDF) has biased composition (acidic residues).

Belongs to the RecA family.

The protein resides in the cytoplasm. Can catalyze the hydrolysis of ATP in the presence of single-stranded DNA, the ATP-dependent uptake of single-stranded DNA by duplex DNA, and the ATP-dependent hybridization of homologous single-stranded DNAs. It interacts with LexA causing its activation and leading to its autocatalytic cleavage. This Escherichia coli O157:H7 (strain EC4115 / EHEC) protein is Protein RecA.